Here is a 118-residue protein sequence, read N- to C-terminus: Basic phospholipase A2 CM-II (118 aa).

7 cysteine pairs are disulfide-bonded: C11-C70, C26-C117, C28-C44, C43-C98, C50-C91, C59-C84, and C77-C89. Y27, G29, and G31 together coordinate Ca(2+). The active site involves H47. D48 lines the Ca(2+) pocket. D92 is an active-site residue.

It belongs to the phospholipase A2 family. Group I subfamily. D49 sub-subfamily. Ca(2+) is required as a cofactor. As to expression, expressed by the venom gland.

The protein resides in the secreted. The catalysed reaction is a 1,2-diacyl-sn-glycero-3-phosphocholine + H2O = a 1-acyl-sn-glycero-3-phosphocholine + a fatty acid + H(+). Functionally, snake venom phospholipase A2 (PLA2) that causes myonecrosis when injected intramuscularly, causes neuromuscular blockade with a gradual contracture and a decreased sensitivity to ACh and KCl (in the chick biventer cervicis nerve-muscle preparation), abolishes twitches evoked by indirect stimulation earlier than those by direct stimulation (in the mouse phrenic nerve-diaphragm preparation), shows indirect hemolytic activity, and shows weak anticoagulant activity. PLA2 catalyzes the calcium-dependent hydrolysis of the 2-acyl groups in 3-sn-phosphoglycerides. This Naja mossambica (Mozambique spitting cobra) protein is Basic phospholipase A2 CM-II.